Reading from the N-terminus, the 282-residue chain is Undecaprenyl-diphosphatase (282 aa).

The next 7 membrane-spanning stretches (helical) occupy residues 1 to 21, 40 to 60, 85 to 105, 117 to 137, 196 to 216, 229 to 249, and 258 to 278; these read MTLF…FLPV, GAAF…IYFY, AAMG…GLLF, YWVS…EWSV, FSFL…LYHT, AITA…AFLI, and SIFI…IAAG.

The protein belongs to the UppP family.

The protein localises to the cell inner membrane. It catalyses the reaction di-trans,octa-cis-undecaprenyl diphosphate + H2O = di-trans,octa-cis-undecaprenyl phosphate + phosphate + H(+). In terms of biological role, catalyzes the dephosphorylation of undecaprenyl diphosphate (UPP). Confers resistance to bacitracin. The chain is Undecaprenyl-diphosphatase from Chlorobium phaeobacteroides (strain DSM 266 / SMG 266 / 2430).